The following is a 385-amino-acid chain: MLTVKQIEAAKPKEKPYRLLDGNGLYLYVPVSGKKVWQLRYKIDGKEKILTVGKYPLMTLQEARDKAWTARKDISVGIDPVKAKKASSNNNSFSAIYKEWYEHKKQVWSVGYATELAKMFDDDILPIIGGLEIQDIEPMQLLEVIRRFEDRGAMERANKARRRCGEVFRYAIVTGRAKYNPAPDLADAMKGYRKKNFPFLPADQIPAFNKALATFSGSIVSLIATKVLRYTALRTKELRSMLWKNVDFENRIITIDASVMKGRKIHVVPMSDQVVELLTTLSSITKPVSEFVFAGRNDKKKPICENAVLLVIKQIGYEGLESGHGFRHEFSTIMNEHEWPADAIEVQLAHANGGSVRGIYNHAQYLDKRREMMQWWADWLDEKVE.

The Core-binding (CB) domain occupies 91 to 172; that stretch reads NSFSAIYKEW…RCGEVFRYAI (82 aa). A Tyr recombinase domain is found at 195–373; that stretch reads KNFPFLPADQ…QYLDKRREMM (179 aa). Active-site residues include Arg-234, Lys-261, His-324, Arg-327, and His-350. Catalysis depends on Tyr-360, which acts as the O-(3'-phospho-DNA)-tyrosine intermediate.

It belongs to the 'phage' integrase family.

In terms of biological role, integrase is necessary for integration of the phage into the host genome by site-specific recombination. In conjunction with excisionase, integrase is also necessary for excision of the prophage from the host genome. This Escherichia coli (strain K12) protein is Prophage integrase IntS (intS).